A 340-amino-acid chain; its full sequence is Uroporphyrinogen decarboxylase (340 aa).

Substrate-binding positions include 21–25 (RQAGR), Phe-40, Asp-71, Tyr-147, Ser-202, and His-316.

The protein belongs to the uroporphyrinogen decarboxylase family. As to quaternary structure, homodimer.

It localises to the cytoplasm. The catalysed reaction is uroporphyrinogen III + 4 H(+) = coproporphyrinogen III + 4 CO2. Its pathway is porphyrin-containing compound metabolism; protoporphyrin-IX biosynthesis; coproporphyrinogen-III from 5-aminolevulinate: step 4/4. Catalyzes the decarboxylation of four acetate groups of uroporphyrinogen-III to yield coproporphyrinogen-III. This Helicobacter hepaticus (strain ATCC 51449 / 3B1) protein is Uroporphyrinogen decarboxylase.